The primary structure comprises 739 residues: Eukaryotic translation initiation factor 3 subunit B (739 aa).

Residues 39–125 (AFVVIDGLPV…HTLAVNKLTD (87 aa)) form the RRM domain. 5 WD repeats span residues 191–229 (RDHWTQLFVQWSPLGTYLASVHPQGVQLWGGPQFGKQKQ), 231–288 (PHPF…RSFV), 457–498 (SLKD…SFFA), 516–559 (IEKK…EKPE), and 574–612 (NEHFGVTDIDWDPTGRYVVSSASAWTHSLENGYHIHTFS).

This sequence belongs to the eIF-3 subunit B family. Component of the eukaryotic translation initiation factor 3 (eIF-3) complex.

The protein resides in the cytoplasm. In terms of biological role, RNA-binding component of the eukaryotic translation initiation factor 3 (eIF-3) complex, which is involved in protein synthesis of a specialized repertoire of mRNAs and, together with other initiation factors, stimulates binding of mRNA and methionyl-tRNAi to the 40S ribosome. The eIF-3 complex specifically targets and initiates translation of a subset of mRNAs involved in cell proliferation. This is Eukaryotic translation initiation factor 3 subunit B from Coccidioides immitis (strain RS) (Valley fever fungus).